Consider the following 366-residue polypeptide: MSGNTLGTLFCVTNFGESHGPAIGCVIDGCPPGMELSEADIQADLDRRRPGTSRHVTQRNEPDAVEILSGVYEGKTTGTPIALLIRNTDQRSKDYGNIAQSFRPGHADYAYWHKYGLRDPRGGGRSSARLTAPTVAAGAVAKKWLAEKYGTRFRACMTQLGELPIPFENWEHVPHNPFFAPVADVQAYEDYMDALRKSGDSCGARIRVQATSVPVGLGEPLYDKLDADIAHVMMGLNAVKGVEIGAGFASVAQRGTTHGDSLTPTGFASNNAGGVLGGISTGQDIEVSLAIKPTSSIISPRESIDIHGQSTEVITKGRHDPCVGIRAAPIAEALLALVIMDHALRHRAQCGDVVQAVAPIPAVRLG.

NADP(+)-binding residues include Arg-48 and Arg-54. FMN-binding positions include Arg-125–Ser-127, Asn-237–Ala-238, Gly-277, Lys-292–Ser-296, and Arg-318.

It belongs to the chorismate synthase family. Homotetramer. Requires FMNH2 as cofactor.

It catalyses the reaction 5-O-(1-carboxyvinyl)-3-phosphoshikimate = chorismate + phosphate. The protein operates within metabolic intermediate biosynthesis; chorismate biosynthesis; chorismate from D-erythrose 4-phosphate and phosphoenolpyruvate: step 7/7. Its function is as follows. Catalyzes the anti-1,4-elimination of the C-3 phosphate and the C-6 proR hydrogen from 5-enolpyruvylshikimate-3-phosphate (EPSP) to yield chorismate, which is the branch point compound that serves as the starting substrate for the three terminal pathways of aromatic amino acid biosynthesis. This reaction introduces a second double bond into the aromatic ring system. The protein is Chorismate synthase of Acidovorax ebreus (strain TPSY) (Diaphorobacter sp. (strain TPSY)).